The sequence spans 129 residues: Natriuretic peptides B (129 aa).

The first 26 residues, 1-26 (MDPQTALSRALLLLLFLHLSLLGCRS), serve as a signal peptide directing secretion. Cys-107 and Cys-123 are disulfide-bonded.

This sequence belongs to the natriuretic peptide family. In terms of processing, the precursor molecule is proteolytically cleaved, possibly by FURIN or CORIN, to produce the active peptide. May undergo further proteolytic cleavage by various proteases such as DPP4, MME and possibly FAP, to give rise to a variety of shorter peptides. May be cleaved at Pro-99 by the prolyl endopeptidase FAP (seprase) activity (in vitro). May be degraded by IDE. During IDE degradation, the resulting products initially increase the activation of NPR1 and can also stimulate NPR2 to produce cGMP before the fragments are completely degraded and inactivated by IDE (in vitro).

The protein resides in the secreted. Cardiac hormone that plays a key role in mediating cardio-renal homeostasis. May also function as a paracrine antifibrotic factor in the heart. Acts by specifically binding and stimulating NPR1 to produce cGMP, which in turn activates effector proteins that drive various biological responses. Involved in regulating the extracellular fluid volume and maintaining the fluid-electrolyte balance through natriuresis, diuresis, vasorelaxation, and inhibition of renin and aldosterone secretion. Binds the clearance receptor NPR3. In Bos taurus (Bovine), this protein is Natriuretic peptides B (NPPB).